Consider the following 258-residue polypeptide: Pro-thyrotropin-releasing hormone-A (258 aa).

An N-terminal signal peptide occupies residues 1–22 (MKSACLIILASLVVCNLTLARG). At Gln78 the chain carries Pyrrolidone carboxylic acid. Pro80 carries the post-translational modification Proline amide. Basic and acidic residues-rich tracts occupy residues 84 to 98 (YQEE…GKRE) and 107 to 119 (EVQK…KRED). The tract at residues 84-124 (YQEELEKRQHPGKREEDEDEDYDEVQKRQHPGKREDEFDSF) is disordered. A Pyrrolidone carboxylic acid modification is found at Gln92. Residue Pro94 is modified to Proline amide. Gln112 is modified (pyrrolidone carboxylic acid). A Proline amide modification is found at Pro114. Gln131 carries the post-translational modification Pyrrolidone carboxylic acid. At Pro133 the chain carries Proline amide. Pyrrolidone carboxylic acid is present on Gln156. Pro158 carries the post-translational modification Proline amide. Disordered regions lie at residues 166–215 (YSKR…PCDV) and 236–258 (SRAE…TEQE). Gln170 is modified (pyrrolidone carboxylic acid). Pro172 carries the post-translational modification Proline amide. Basic and acidic residues predominate over residues 184–193 (GDLRELEKRQ). Residue Gln193 is modified to Pyrrolidone carboxylic acid. Pro195 is subject to Proline amide. Gln242 is modified (pyrrolidone carboxylic acid). Pro244 carries the post-translational modification Proline amide.

The protein belongs to the TRH family.

The protein localises to the secreted. In terms of biological role, functions as a regulator of the biosynthesis of TSH in the anterior pituitary gland and as a neurotransmitter/ neuromodulator in the central and peripheral nervous systems. The protein is Pro-thyrotropin-releasing hormone-A (trha) of Oncorhynchus nerka (Sockeye salmon).